Consider the following 318-residue polypeptide: Malate dehydrogenase (318 aa).

NAD(+) contacts are provided by residues 10-15 and Asp34; that span reads GGGQIG. Residues Arg83 and Arg89 each coordinate substrate. Residues Asn96 and 119–121 contribute to the NAD(+) site; that span reads ISN. Asn121 and Arg152 together coordinate substrate. The active-site Proton acceptor is the His176.

The protein belongs to the LDH/MDH superfamily. MDH type 3 family.

It carries out the reaction (S)-malate + NAD(+) = oxaloacetate + NADH + H(+). Catalyzes the reversible oxidation of malate to oxaloacetate. The chain is Malate dehydrogenase from Geotalea uraniireducens (strain Rf4) (Geobacter uraniireducens).